The primary structure comprises 363 residues: Ribosomal RNA large subunit methyltransferase M (363 aa).

Residues Ser-187, 220–223 (CPGG), Asp-239, Asp-259, and Asp-276 each bind S-adenosyl-L-methionine. Residue Lys-305 is the Proton acceptor of the active site.

It belongs to the class I-like SAM-binding methyltransferase superfamily. RNA methyltransferase RlmE family. RlmM subfamily. Monomer.

The protein resides in the cytoplasm. It carries out the reaction cytidine(2498) in 23S rRNA + S-adenosyl-L-methionine = 2'-O-methylcytidine(2498) in 23S rRNA + S-adenosyl-L-homocysteine + H(+). Its function is as follows. Catalyzes the 2'-O-methylation at nucleotide C2498 in 23S rRNA. The protein is Ribosomal RNA large subunit methyltransferase M of Shewanella loihica (strain ATCC BAA-1088 / PV-4).